Here is a 492-residue protein sequence, read N- to C-terminus: Argininosuccinate lyase (492 aa).

This sequence belongs to the lyase 1 family. Argininosuccinate lyase subfamily.

Its subcellular location is the cytoplasm. The enzyme catalyses 2-(N(omega)-L-arginino)succinate = fumarate + L-arginine. It participates in amino-acid biosynthesis; L-arginine biosynthesis; L-arginine from L-ornithine and carbamoyl phosphate: step 3/3. The polypeptide is Argininosuccinate lyase (Methanoculleus marisnigri (strain ATCC 35101 / DSM 1498 / JR1)).